The following is an 830-amino-acid chain: Formin-like protein 14 (830 aa).

The signal sequence occupies residues 1–34 (MAMAMAMPSSSPPLFFSLLNLMLLLLLLAPYCSA). Over residues 40–59 (NNTHHRSSSPTQTTLQQLHS) the composition is skewed to polar residues. The tract at residues 40 to 195 (NNTHHRSSSP…NISTLVHPTQ (156 aa)) is disordered. 2 stretches are compositionally biased toward pro residues: residues 61–86 (DSPPPPPLPTPTVTTPTPPPPPPAPR) and 95–135 (PPPP…PTPK). The segment covering 149–160 (YPFTNYPFFPNF) has biased composition (low complexity). The helical transmembrane segment at 203 to 223 (VLQALLLSFLSLCLLLLSALL) threads the bilayer. A disordered region spans residues 235 to 446 (HHSHSHPNAR…LHSDKLKPGS (212 aa)). A compositionally biased stretch (pro residues) spans 314–323 (RPLPPLPRVG). Residues 324-369 (PPSGEFASRSSASDPSTAPPAAAEASSSSLSPSSPSASSPTLGSSP) are compositionally biased toward low complexity. The FH2 domain occupies 390-823 (PKRRPQPPEP…MMGRDWNMAA (434 aa)). Residues 424–446 (HSPSEKSMRKSRPLHSDKLKPGS) show a composition bias toward basic and acidic residues.

Belongs to the formin-like family. Class-I subfamily.

It localises to the membrane. The chain is Formin-like protein 14 (FH14) from Oryza sativa subsp. japonica (Rice).